A 178-amino-acid chain; its full sequence is Matrix-remodeling-associated protein 7 (178 aa).

A helical membrane pass occupies residues 7 to 27; that stretch reads LLAALPALVTALALLLAWLLL. Positions 33–121 are disordered; the sequence is RVPAPESTAS…AFSFKYSPGQ (89 aa). The segment covering 48–65 has biased composition (pro residues); sequence APAPPEPPESCAPEPAPE. Residues 76–85 are compositionally biased toward acidic residues; sequence PEESEAEEPA. Phosphoserine occurs at positions 79 and 165.

Its subcellular location is the membrane. The sequence is that of Matrix-remodeling-associated protein 7 (Mxra7) from Mus musculus (Mouse).